The sequence spans 879 residues: Metabotropic glutamate receptor 3 (879 aa).

The N-terminal stretch at Met1 to Ser22 is a signal peptide. At Leu23 to Trp576 the chain is on the extracellular side. An intrachain disulfide couples Cys57 to Cys99. L-glutamate is bound by residues Ser151 and Ala172 to Thr174. Asn209 carries N-linked (GlcNAc...) asparagine glycosylation. Tyr222 serves as a coordination point for L-glutamate. 7 cysteine pairs are disulfide-bonded: Cys240-Cys527, Cys361-Cys373, Cys412-Cys419, Cys509-Cys528, Cys513-Cys531, Cys534-Cys546, and Cys549-Cys562. Residue Asn292 is glycosylated (N-linked (GlcNAc...) asparagine). Residue Asp301 participates in L-glutamate binding. Residue Lys389 coordinates L-glutamate. Asn414 and Asn439 each carry an N-linked (GlcNAc...) asparagine glycan. The helical transmembrane segment at Ala577 to Ile599 threads the bilayer. Over Lys600–Glu613 the chain is Cytoplasmic. The helical transmembrane segment at Leu614 to Ala634 threads the bilayer. Residues Lys635–Arg645 lie on the Extracellular side of the membrane. The helical transmembrane segment at Leu646 to Asn664 threads the bilayer. At Cys665–Gln688 the chain is on the cytoplasmic side. A helical membrane pass occupies residues Val689 to Leu709. Over Glu710–Asp734 the chain is Extracellular. The helical transmembrane segment at Ser735–Phe756 threads the bilayer. Topologically, residues Lys757–Lys769 are cytoplasmic. A helical membrane pass occupies residues Phe770 to Thr792. The Extracellular segment spans residues Ser793–Thr802. The chain crosses the membrane as a helical span at residues Met803 to Phe828. Topologically, residues Gln829–Leu879 are cytoplasmic.

The protein belongs to the G-protein coupled receptor 3 family. As to quaternary structure, interacts with TAMALIN. Detected in brain cortex, thalamus, subthalamic nucleus, substantia nigra, hypothalamus, hippocampus, corpus callosum, caudate nucleus and amygdala.

The protein localises to the cell membrane. G-protein coupled receptor for glutamate. Ligand binding causes a conformation change that triggers signaling via guanine nucleotide-binding proteins (G proteins) and modulates the activity of down-stream effectors. Signaling inhibits adenylate cyclase activity. The protein is Metabotropic glutamate receptor 3 (GRM3) of Homo sapiens (Human).